Consider the following 214-residue polypeptide: Endothelin-3 (214 aa).

A signal peptide spans 1 to 16 (MEPGLWLLLGLTVTSA). Positions 17–94 (AGLVPCPQSG…DKGLPAHHRP (78 aa)) are excised as a propeptide. The interval 24–91 (QSGDSGRASV…KQEDKGLPAH (68 aa)) is disordered. A compositionally biased stretch (polar residues) spans 25–35 (SGDSGRASVSQ). 2 disulfides stabilise this stretch: Cys-97-Cys-111 and Cys-99-Cys-107. The propeptide occupies 118–214 (INTPEQTVPY…MSRTDKAHRP (97 aa)). The tract at residues 159-173 (CTCMGADDKACAHFC) is endothelin-like. Positions 183–214 (SGRAERPAAEEMRETGGPRQRLMSRTDKAHRP) are disordered. The span at 185 to 198 (RAERPAAEEMRETG) shows a compositional bias: basic and acidic residues.

Belongs to the endothelin/sarafotoxin family.

It localises to the secreted. Functionally, endothelins are endothelium-derived vasoconstrictor peptides. This chain is Endothelin-3 (Edn3), found in Mus musculus (Mouse).